A 382-amino-acid chain; its full sequence is Putative phospholipase A1 (382 aa).

Positions 1–27 (MPTMGAEMNTRNMRYILLTGLLPMASA) are cleaved as a signal peptide. Residues 28–65 (FGETALQCAALTDNVTRLACYDRIFAAQLPSSAGQEGQ) lie on the Periplasmic side of the membrane. The chain crosses the membrane as a beta stranded span at residues 66 to 78 (ESKAVLNLTETVR). The Extracellular segment spans residues 79–168 (SSLDKGEAVI…VQEKFGQQKR (90 aa)). A beta stranded membrane pass occupies residues 169–183 (AETKLQVSFKSKIAE). The Periplasmic segment spans residues 184–189 (DLFKTR). A beta stranded membrane pass occupies residues 190-202 (ADLWFGYTQRSDW). Residues 203–213 (QIYNQGRKSAP) lie on the Extracellular side of the membrane. Ser211 provides a ligand contact to Ca(2+). Residues 214-233 (FRNTDYKPEIFLTQPVKADL) form a beta stranded membrane-spanning segment. At 234–236 (PFG) the chain is on the periplasmic side. The beta stranded transmembrane segment at 237–250 (GRLRMLGAGFVHQS) threads the bilayer. The active-site Proton acceptor is His248. Ser250 functions as the Nucleophile in the catalytic mechanism. Residues 251 to 259 (NGQSRPESR) lie on the Extracellular side of the membrane. Ser258 serves as a coordination point for Ca(2+). A beta stranded transmembrane segment spans residues 260–272 (SWNRIYAMAGMEW). Residues 273–274 (GK) are Periplasmic-facing. A beta stranded transmembrane segment spans residues 275-284 (LTVIPRVWVR). Residues 285–306 (AFDQSGDKNDNPDIADYMGYGD) lie on the Extracellular side of the membrane. Asp294 lines the Ca(2+) pocket. Residues 307–313 (VKLQYRL) form a beta stranded membrane-spanning segment. Residues 314-315 (ND) are Periplasmic-facing. Residues 316–325 (RQNVYSVLRY) form a beta stranded membrane-spanning segment. The Extracellular segment spans residues 326-332 (NPKTGYG). Residues 333–341 (AIEAAYTFP) form a beta stranded membrane-spanning segment. Topologically, residues 342 to 346 (IKGKL) are periplasmic. Residues 347-356 (KGVVRGFHGY) traverse the membrane as a beta stranded segment. At 357-365 (GESLIDYNH) the chain is on the extracellular side. A beta stranded transmembrane segment spans residues 366 to 377 (KQNGIGIGLMFN). The Periplasmic portion of the chain corresponds to 378–382 (DLDGI).

Belongs to the phospholipase A1 family. Homodimer; dimerization is reversible, and the dimeric form is the active one. Requires Ca(2+) as cofactor.

The protein localises to the cell outer membrane. The catalysed reaction is a 1,2-diacyl-sn-glycero-3-phosphocholine + H2O = a 2-acyl-sn-glycero-3-phosphocholine + a fatty acid + H(+). It catalyses the reaction a 1,2-diacyl-sn-glycero-3-phosphocholine + H2O = a 1-acyl-sn-glycero-3-phosphocholine + a fatty acid + H(+). Hydrolysis of phosphatidylcholine with phospholipase A2 (EC 3.1.1.4) and phospholipase A1 (EC 3.1.1.32) activities. The chain is Putative phospholipase A1 from Neisseria meningitidis serogroup B (strain ATCC BAA-335 / MC58).